Consider the following 148-residue polypeptide: D-aminoacyl-tRNA deacylase (148 aa).

The Gly-cisPro motif, important for rejection of L-amino acids motif lies at 136–137 (GP).

This sequence belongs to the DTD family. In terms of assembly, homodimer.

The protein resides in the cytoplasm. It carries out the reaction glycyl-tRNA(Ala) + H2O = tRNA(Ala) + glycine + H(+). It catalyses the reaction a D-aminoacyl-tRNA + H2O = a tRNA + a D-alpha-amino acid + H(+). Its function is as follows. An aminoacyl-tRNA editing enzyme that deacylates mischarged D-aminoacyl-tRNAs. Also deacylates mischarged glycyl-tRNA(Ala), protecting cells against glycine mischarging by AlaRS. Acts via tRNA-based rather than protein-based catalysis; rejects L-amino acids rather than detecting D-amino acids in the active site. By recycling D-aminoacyl-tRNA to D-amino acids and free tRNA molecules, this enzyme counteracts the toxicity associated with the formation of D-aminoacyl-tRNA entities in vivo and helps enforce protein L-homochirality. This chain is D-aminoacyl-tRNA deacylase, found in Streptococcus mutans serotype c (strain ATCC 700610 / UA159).